The chain runs to 148 residues: MERCVVKVRRVRGGDQNLPCYMTVHAAGMDLCADLVDDLVLNPGERKLVPTGLAIALPDGFEAQIRPRSGLALKHGIALVNSPGTIDPDYRGEIGVILINHGSEPFVVRRGERIAQMVFAPFARAELVEVDELDETARGEGGFGHTGR.

Residues 68-70 (RSG), asparagine 81, and 85-87 (TID) contribute to the substrate site.

The protein belongs to the dUTPase family. It depends on Mg(2+) as a cofactor.

It catalyses the reaction dUTP + H2O = dUMP + diphosphate + H(+). Its pathway is pyrimidine metabolism; dUMP biosynthesis; dUMP from dCTP (dUTP route): step 2/2. Functionally, this enzyme is involved in nucleotide metabolism: it produces dUMP, the immediate precursor of thymidine nucleotides and it decreases the intracellular concentration of dUTP so that uracil cannot be incorporated into DNA. The sequence is that of Deoxyuridine 5'-triphosphate nucleotidohydrolase from Geobacter metallireducens (strain ATCC 53774 / DSM 7210 / GS-15).